Consider the following 310-residue polypeptide: UDP-N-acetylenolpyruvoylglucosamine reductase (310 aa).

Positions 23–188 (KVGGNAEIFF…LKAVFKVNKG (166 aa)) constitute an FAD-binding PCMH-type domain. Arg-168 is an active-site residue. The active-site Proton donor is the Ser-217. The active site involves Glu-287.

Belongs to the MurB family. FAD is required as a cofactor.

It localises to the cytoplasm. The enzyme catalyses UDP-N-acetyl-alpha-D-muramate + NADP(+) = UDP-N-acetyl-3-O-(1-carboxyvinyl)-alpha-D-glucosamine + NADPH + H(+). Its pathway is cell wall biogenesis; peptidoglycan biosynthesis. In terms of biological role, cell wall formation. This is UDP-N-acetylenolpyruvoylglucosamine reductase from Rickettsia bellii (strain OSU 85-389).